The chain runs to 645 residues: Minor extracellular protease Epr (645 aa).

The signal sequence occupies residues 1 to 27 (MKNMSCKLVVSVTLFFSFLTIGPLAHA). The propeptide occupies 28-103 (QNSSEKEVIV…AADSTDFKVL (76 aa)). The Peptidase S8 domain maps to 115 to 382 (QWNLEPIQVK…YGLIQYKAQA (268 aa)). Catalysis depends on charge relay system residues aspartate 142, histidine 172, and serine 326. Disordered regions lie at residues 490 to 577 (KQAK…KTAL) and 591 to 645 (AEAK…KPKK). The span at 491 to 508 (QAKDKVAKAEKSKKKTDV) shows a compositional bias: basic and acidic residues. Over residues 522–547 (SEKTSLQKRLNKVKSTNLKTAQQSVS) the composition is skewed to polar residues. Over residues 592–610 (EAKKVETAKAKVKKAEKDK) the composition is skewed to basic and acidic residues.

This sequence belongs to the peptidase S8 family. May undergo two steps of processing in its passage through the cell membrane: removal of the N-terminal signal sequence and cleavage of the C-terminal domain. Several active forms of Epr with molecular masses between 40 and 34 kDa were found in the medium of B.subtilis cultures. The size variation of the active forms expressed by the complete epr gene appears to be the result of partial removal of the C-terminus either by processing or degradation.

Its subcellular location is the secreted. It localises to the cell wall. With respect to regulation, requires Ca(2+) for stability. Activity is inhibited by phenylmethylsulfonyl fluoride (PMSF) and EDTA. Functionally, serine protease. Involved in the production of the competence and sporulation stimulating factor CSF. In addition, is essential for swarming motility. Plays a key role in DegU-mediated swarming motility. The protease activity is dispensable for swarming. Not essential for growth or sporulation. The polypeptide is Minor extracellular protease Epr (Bacillus subtilis (strain 168)).